The chain runs to 150 residues: Large ribosomal subunit protein uL13 (150 aa).

The tract at residues 130 to 150 (EHPHGAQQPQPYQLNPSASIK) is disordered. Polar residues predominate over residues 136-150 (QQPQPYQLNPSASIK).

This sequence belongs to the universal ribosomal protein uL13 family. Part of the 50S ribosomal subunit.

Its function is as follows. This protein is one of the early assembly proteins of the 50S ribosomal subunit, although it is not seen to bind rRNA by itself. It is important during the early stages of 50S assembly. The chain is Large ribosomal subunit protein uL13 from Synechococcus sp. (strain RCC307).